Consider the following 145-residue polypeptide: D-aminoacyl-tRNA deacylase (145 aa).

Positions 137–138 (GP) match the Gly-cisPro motif, important for rejection of L-amino acids motif.

Belongs to the DTD family. Homodimer.

Its subcellular location is the cytoplasm. It catalyses the reaction glycyl-tRNA(Ala) + H2O = tRNA(Ala) + glycine + H(+). The enzyme catalyses a D-aminoacyl-tRNA + H2O = a tRNA + a D-alpha-amino acid + H(+). Functionally, an aminoacyl-tRNA editing enzyme that deacylates mischarged D-aminoacyl-tRNAs. Also deacylates mischarged glycyl-tRNA(Ala), protecting cells against glycine mischarging by AlaRS. Acts via tRNA-based rather than protein-based catalysis; rejects L-amino acids rather than detecting D-amino acids in the active site. By recycling D-aminoacyl-tRNA to D-amino acids and free tRNA molecules, this enzyme counteracts the toxicity associated with the formation of D-aminoacyl-tRNA entities in vivo and helps enforce protein L-homochirality. In Shewanella halifaxensis (strain HAW-EB4), this protein is D-aminoacyl-tRNA deacylase.